The following is a 403-amino-acid chain: L-lactate oxidase (403 aa).

In terms of domain architecture, FMN hydroxy acid dehydrogenase spans 21–375 (EGSVDFVNVF…KHFKLRHNPY (355 aa)). Residue tyrosine 47 coordinates pyruvate. FMN contacts are provided by residues 99-101 (PVA), serine 128, and glutamine 150. Residue tyrosine 152 coordinates pyruvate. An FMN-binding site is contributed by threonine 178. The pyruvate site is built by arginine 187 and tyrosine 220. Residue lysine 246 coordinates FMN. Histidine 270 and arginine 273 together coordinate pyruvate. Histidine 270 serves as the catalytic Proton acceptor. FMN-binding positions include 301–305 (DSGVR) and arginine 325.

Belongs to the FMN-dependent alpha-hydroxy acid dehydrogenase family. In terms of assembly, homotetramer. FMN is required as a cofactor.

The catalysed reaction is (S)-lactate + O2 = pyruvate + H2O2. Functionally, catalyzes the oxidation of (S)-lactate (L-lactate) to pyruvate, with a reduction of O2 to H2O2. Is likely involved in the L-lactate aerobic metabolism of S.iniae that enables the bacterium to utilize L-lactate as an energy source for growth under aerobic conditions in the absence (or at low concentrations) of glucose. The sequence is that of L-lactate oxidase from Streptococcus iniae (Streptococcus shiloi).